We begin with the raw amino-acid sequence, 220 residues long: Metalloproteinase inhibitor 2 (220 aa).

Residues 1 to 26 (MGAAARTLRLALGLLLLATLLRPADA) form the signal peptide. C27 contributes to the Zn(2+) binding site. Involved in metalloproteinase-binding regions lie at residues 27-30 (CSCS) and 95-96 (SA). Disulfide bonds link C27-C98, C29-C127, C39-C152, C154-C201, C159-C164, and C172-C193. Residues 27 to 152 (CSCSPVHPQQ…SLNHRYQMGC (126 aa)) form the NTR domain.

It belongs to the protease inhibitor I35 (TIMP) family. As to quaternary structure, interacts (via the C-terminal) with MMP2 (via the C-terminal PEX domain); the interaction inhibits the MMP2 activity. In terms of processing, the activity of TIMP2 is dependent on the presence of disulfide bonds.

The protein localises to the secreted. Complexes with metalloproteinases (such as collagenases) and irreversibly inactivates them by binding to their catalytic zinc cofactor. Known to act on MMP-1, MMP-2, MMP-3, MMP-7, MMP-8, MMP-9, MMP-10, MMP-13, MMP-14, MMP-15, MMP-16 and MMP-19. The protein is Metalloproteinase inhibitor 2 (TIMP2) of Homo sapiens (Human).